The sequence spans 504 residues: MESGVRILSLLILLHNSLASESEESRLIKHLFTSYDQKARPSKGLDDVVPVTLKLTLTNLIDLNEKEETLTTNVWVQIAWNDDRLVWNVTDYGGIGFVPVPHDIMWLPDIVLENNIDGNFEVAYYANVLVYNTGYIYWLPPAIFRSTCNIEITYFPFDWQNCSLVFRSKTYSANEIDLQLVTDDETGLPFDQVDIDREAFTENGEWAIMHRPARKILNPKYSKEDLRYQEIVFNLIIQRKPLFYIINIIVPCVLISFLVVLVYFLPAKAGGQKCTVSISVLLAQTVFLFLIAQMVPETSLSVPLIGKYLMFVMFVSTLIVLSCVIVLNVSLRSPSTHNLSTKVKHMLLEVLPQFLHLRVEPCDEGEETPRERRRSSLGIMLKAEEYVLKKPRSELMFERQRERHGMRREPDGYRADGFDVGVTTTLYRNLAQCAPEIKDCVDACNFITQNTKEQNRTGSEMENWILIGKVLDVLCFWVALPLFVLGTLAIFLMGHFNTAPEHPF.

A signal peptide spans 1–19 (MESGVRILSLLILLHNSLA). Over 20-240 (SESEESRLIK…IVFNLIIQRK (221 aa)) the chain is Extracellular. N-linked (GlcNAc...) asparagine glycans are attached at residues N88 and N161. C148 and C162 are oxidised to a cystine. A helical transmembrane segment spans residues 241 to 265 (PLFYIINIIVPCVLISFLVVLVYFL). Residues 266–273 (PAKAGGQK) lie on the Cytoplasmic side of the membrane. The helical transmembrane segment at 274-292 (CTVSISVLLAQTVFLFLIA) threads the bilayer. Over 293–307 (QMVPETSLSVPLIGK) the chain is Extracellular. Residues 308–329 (YLMFVMFVSTLIVLSCVIVLNV) traverse the membrane as a helical segment. Over 330–473 (SLRSPSTHNL…WILIGKVLDV (144 aa)) the chain is Cytoplasmic. The chain crosses the membrane as a helical span at residues 474–497 (LCFWVALPLFVLGTLAIFLMGHFN). Residues 498 to 504 (TAPEHPF) are Extracellular-facing.

It belongs to the ligand-gated ion channel (TC 1.A.9) family. Acetylcholine receptor (TC 1.A.9.1) subfamily. Epsilon/CHRNE sub-subfamily. Pentamer of two alpha chains, and one each of the beta, delta, and gamma (in immature muscle) or epsilon (in mature muscle) chains.

It is found in the postsynaptic cell membrane. The protein resides in the cell membrane. The catalysed reaction is K(+)(in) = K(+)(out). It catalyses the reaction Na(+)(in) = Na(+)(out). Functionally, after binding acetylcholine, the AChR responds by an extensive change in conformation that affects all subunits and leads to opening of an ion-conducting channel across the plasma membrane. This is Acetylcholine receptor subunit epsilon (chrne) from Xenopus laevis (African clawed frog).